We begin with the raw amino-acid sequence, 360 residues long: GDSL esterase/lipase At2g31550 (360 aa).

The signal sequence occupies residues 1–27 (MSTSKAITLTLFITTTLLASCDAAANA). N-linked (GlcNAc...) asparagine glycosylation is present at asparagine 26. Catalysis depends on serine 42, which acts as the Nucleophile. Residues asparagine 104 and asparagine 326 are each glycosylated (N-linked (GlcNAc...) asparagine). Catalysis depends on residues aspartate 334 and histidine 337.

This sequence belongs to the 'GDSL' lipolytic enzyme family.

The protein localises to the secreted. In Arabidopsis thaliana (Mouse-ear cress), this protein is GDSL esterase/lipase At2g31550.